A 314-amino-acid polypeptide reads, in one-letter code: NAC domain-containing protein 10 (314 aa).

Polar residues predominate over residues 18–39; sequence VSNTDHPSVQLKDQSQSCVTSR. Disordered stretches follow at residues 18-48 and 150-182; these read VSNTDHPSVQLKDQSQSCVTSRPDSKISAET and YTTGTRKRRKVSTDEEGHETRWHKTGKTRPVLS. In terms of domain architecture, NAC spans 77–236; the sequence is LPAGVKFDPS…EPVLSKVFYQ (160 aa). Basic and acidic residues predominate over residues 160-171; the sequence is VSTDEEGHETRW. A DNA-binding region spans residues 187–242; it reads TGFKKILVLYTNYGRQKKPEKTNWVMHQYHLGSSEDEKDGEPVLSKVFYQTQPRQC.

In terms of tissue distribution, expressed in protoxylem and elongating interfascicular fiber cells of elongating internodes, developing metaxylem cells and interfascicular fibers of non-elongating internodes and developing secondary xylem of roots.

It localises to the nucleus. Transcriptional activator that plays a regulatory role in the development of secondary cell wall fibers. Is a direct target of SND1. The chain is NAC domain-containing protein 10 from Arabidopsis thaliana (Mouse-ear cress).